Reading from the N-terminus, the 391-residue chain is FLUCTUATING-LIGHT-ACCLIMATION protein 1, chloroplastic (391 aa).

The N-terminal 48 residues, 1 to 48, are a transit peptide targeting the chloroplast; sequence MASSSTFLELTPFQWNQPLPYTQRPHHRTVLLYSKPQRRSNSIRLQIS. A helical membrane pass occupies residues 87–107; that stretch reads AIAAVLLGLLLFYDPNSALAA. A compositionally biased stretch (low complexity) spans 116-138; it reads SFSSRSRSSSSSSSQSYSVPRTS. Positions 116 to 140 are disordered; it reads SFSSRSRSSSSSSSQSYSVPRTSNP. 2 helical membrane passes run 168 to 188 and 321 to 341; these read FGFG…AFVL and YIVV…PING.

It belongs to the FLAP family.

The protein resides in the plastid. It is found in the chloroplast thylakoid membrane. The protein localises to the chloroplast membrane. Its subcellular location is the chloroplast envelope. In terms of biological role, monitors proton H(+) homeostasis in chloroplasts to manipulate luminal acidification levels appropriately to balance photoprotection and photochemical processes. Required during acclimation response to fluctuating light (e.g. photosynthetic activity optimization) by controlling non-photochemical quenching (NPQ); acts independently from DLDG1. The sequence is that of FLUCTUATING-LIGHT-ACCLIMATION protein 1, chloroplastic from Arabidopsis thaliana (Mouse-ear cress).